Consider the following 848-residue polypeptide: Trimethylamine-N-oxide reductase 1 (848 aa).

The tat-type signal signal peptide spans 1 to 39; it reads MNNNDLFQASRRRFLAQLGGLTVAGMLGPSLLTSRRATA. Position 191 (S191) interacts with Mo-bis(molybdopterin guanine dinucleotide).

Belongs to the prokaryotic molybdopterin-containing oxidoreductase family. In terms of assembly, interacts with the N-terminal domain of TorC. Mo-bis(molybdopterin guanine dinucleotide) is required as a cofactor. In terms of processing, predicted to be exported by the Tat system. The position of the signal peptide cleavage has not been experimentally proven.

Its subcellular location is the periplasm. It catalyses the reaction trimethylamine + 2 Fe(III)-[cytochrome c] + H2O = trimethylamine N-oxide + 2 Fe(II)-[cytochrome c] + 3 H(+). Functionally, reduces trimethylamine-N-oxide (TMAO) into trimethylamine; an anaerobic reaction coupled to energy-yielding reactions. The sequence is that of Trimethylamine-N-oxide reductase 1 (torA) from Escherichia coli O157:H7.